Here is a 118-residue protein sequence, read N- to C-terminus: Holo-[acyl-carrier-protein] synthase (118 aa).

Positions 6 and 55 each coordinate Mg(2+).

It belongs to the P-Pant transferase superfamily. AcpS family. The cofactor is Mg(2+).

It is found in the cytoplasm. It catalyses the reaction apo-[ACP] + CoA = holo-[ACP] + adenosine 3',5'-bisphosphate + H(+). Transfers the 4'-phosphopantetheine moiety from coenzyme A to a Ser of acyl-carrier-protein. The polypeptide is Holo-[acyl-carrier-protein] synthase (Chlorobium chlorochromatii (strain CaD3)).